A 242-amino-acid polypeptide reads, in one-letter code: HTH domain-truncated transcriptional regulator QseD (242 aa).

Belongs to the LysR transcriptional regulatory family.

In terms of biological role, represses EHEC virulence expression. Down-regulates expression of LEE (locus of enterocyte effacement) and iraD genes, and alters AE (attaching and effacing) lesion formation. May regulate transcription through interactions with another HTH DNA-binding protein. This chain is HTH domain-truncated transcriptional regulator QseD (qseD), found in Escherichia coli O157:H7.